Consider the following 275-residue polypeptide: 5'-nucleotidase SurE (275 aa).

4 residues coordinate a divalent metal cation: Asp14, Asp15, Ser46, and Asn104.

The protein belongs to the SurE nucleotidase family. A divalent metal cation is required as a cofactor.

It localises to the cytoplasm. The enzyme catalyses a ribonucleoside 5'-phosphate + H2O = a ribonucleoside + phosphate. Nucleotidase that shows phosphatase activity on nucleoside 5'-monophosphates. In Synechocystis sp. (strain ATCC 27184 / PCC 6803 / Kazusa), this protein is 5'-nucleotidase SurE.